The primary structure comprises 353 residues: Probable dual-specificity RNA methyltransferase RlmN (353 aa).

Glu-95 acts as the Proton acceptor in catalysis. A Radical SAM core domain is found at 103–333 (DGGRKTICIS…PILNRRSPGR (231 aa)). An intrachain disulfide couples Cys-110 to Cys-339. 3 residues coordinate [4Fe-4S] cluster: Cys-117, Cys-121, and Cys-124. Residues 164-165 (GE), Ser-196, 219-221 (SLN), and Asn-296 contribute to the S-adenosyl-L-methionine site. Catalysis depends on Cys-339, which acts as the S-methylcysteine intermediate.

It belongs to the radical SAM superfamily. RlmN family. [4Fe-4S] cluster serves as cofactor.

Its subcellular location is the cytoplasm. The catalysed reaction is adenosine(2503) in 23S rRNA + 2 reduced [2Fe-2S]-[ferredoxin] + 2 S-adenosyl-L-methionine = 2-methyladenosine(2503) in 23S rRNA + 5'-deoxyadenosine + L-methionine + 2 oxidized [2Fe-2S]-[ferredoxin] + S-adenosyl-L-homocysteine. It catalyses the reaction adenosine(37) in tRNA + 2 reduced [2Fe-2S]-[ferredoxin] + 2 S-adenosyl-L-methionine = 2-methyladenosine(37) in tRNA + 5'-deoxyadenosine + L-methionine + 2 oxidized [2Fe-2S]-[ferredoxin] + S-adenosyl-L-homocysteine. Functionally, specifically methylates position 2 of adenine 2503 in 23S rRNA and position 2 of adenine 37 in tRNAs. This chain is Probable dual-specificity RNA methyltransferase RlmN, found in Leptospira biflexa serovar Patoc (strain Patoc 1 / Ames).